A 741-amino-acid polypeptide reads, in one-letter code: uncharacterized protein (741 aa).

Positions 1-18 (MKTISILAFLVLARLIEA) are cleaved as a signal peptide. Disordered stretches follow at residues 142 to 300 (PKVE…GNVD), 423 to 528 (EEDE…SEQG), and 646 to 681 (ETVA…VEDD). Residues 147-165 (EEEEEEYDGEEDDDDESLT) show a composition bias toward acidic residues. 2 stretches are compositionally biased toward low complexity: residues 183-197 (VEPS…STTE) and 205-266 (STTV…SSTT). Residues asparagine 232 and asparagine 241 are each glycosylated (N-linked (GlcNAc...) asparagine). The segment covering 423-432 (EEDEIDETET) has biased composition (acidic residues). The segment covering 433–451 (TESTKTTETTKTTGPAETT) has biased composition (low complexity). Asparagine 461 and asparagine 511 each carry an N-linked (GlcNAc...) asparagine glycan. Residues 500-511 (PIDESTESEEPN) are compositionally biased toward acidic residues. Positions 512–528 (ESVTVTGDTTTDTSEQG) are enriched in low complexity. Polar residues predominate over residues 646 to 656 (ETVAPDTNSPD). Positions 657–671 (ADQEQPDSVEPDNET) are enriched in acidic residues. The N-linked (GlcNAc...) asparagine glycan is linked to asparagine 669. Asparagine 719 carries GPI-anchor amidated asparagine lipidation. The propeptide at 720 to 741 (AANLAGSISLSSGVLLLILMLI) is removed in mature form.

The protein localises to the cell membrane. This is an uncharacterized protein from Candida albicans (strain SC5314 / ATCC MYA-2876) (Yeast).